A 251-amino-acid chain; its full sequence is uncharacterized protein (251 aa).

The segment at Thr229–Thr251 is disordered. The segment covering Ser234–Asn245 has biased composition (basic and acidic residues).

This is an uncharacterized protein from Acanthamoeba polyphaga (Amoeba).